A 463-amino-acid polypeptide reads, in one-letter code: SCF E3 ubiquitin ligase complex F-box protein pof2 (463 aa).

The F-box domain occupies 1–42 (MRVPNEVCFNILSYLEADELRCKSTVCTSWRNFIIPTLWEKV). LRR repeat units follow at residues 145–170 (CPNLKALNIGNCGLVEDTGMVQIIKR), 171–196 (CPYLNRLIIPNCRKLTDVSLQILSEK), 198–220 (DLIELDISGCEGFHNADTLSRLV), 225–247 (GLKELSMDGCTELSHFITFLNLN), 249–271 (ELDAMRALSLNNLPDLKDSDIEL), 278–299 (KLNSLFLSKCIGLTDSSLLSLT), 304–326 (SLTTLHLGHCYEITDIGVQCLLK), 328–353 (CKNITYIDFGGCLRLSDIAVSAIAKL), 354–378 (PYLQRVGLVKCICLTDLSVILLSGS), and 380–405 (SRNLERVHLSYCIGLTAKSVSYLMYN).

As to quaternary structure, part of a SCF E3 ubiquitin ligase complex. Interacts with skp1.

The protein resides in the mitochondrion. Its function is as follows. Involved in substrate recognition in ubiquitin-dependent degradation. The sequence is that of SCF E3 ubiquitin ligase complex F-box protein pof2 (pof2) from Schizosaccharomyces pombe (strain 972 / ATCC 24843) (Fission yeast).